The following is a 78-amino-acid chain: Large ribosomal subunit protein bL28 (78 aa).

A disordered region spans residues 1-20; it reads MSRVCQVTGKGPVTGNNISH.

This sequence belongs to the bacterial ribosomal protein bL28 family.

In Pseudomonas putida (strain W619), this protein is Large ribosomal subunit protein bL28.